Here is a 227-residue protein sequence, read N- to C-terminus: UPF0173 metal-dependent hydrolase BCQ_4418 (227 aa).

Belongs to the UPF0173 family.

This Bacillus cereus (strain Q1) protein is UPF0173 metal-dependent hydrolase BCQ_4418.